Here is a 112-residue protein sequence, read N- to C-terminus: Reprimo-like protein (112 aa).

A helical transmembrane segment spans residues Val-59–Leu-79.

It belongs to the reprimo family.

The protein resides in the membrane. The polypeptide is Reprimo-like protein (rprml) (Xenopus laevis (African clawed frog)).